Reading from the N-terminus, the 415-residue chain is Serine hydroxymethyltransferase (415 aa).

(6S)-5,6,7,8-tetrahydrofolate-binding positions include Leu-122 and 126–128 (GHL). Lys-230 carries the N6-(pyridoxal phosphate)lysine modification.

The protein belongs to the SHMT family. Homodimer. Pyridoxal 5'-phosphate serves as cofactor.

The protein localises to the cytoplasm. It catalyses the reaction (6R)-5,10-methylene-5,6,7,8-tetrahydrofolate + glycine + H2O = (6S)-5,6,7,8-tetrahydrofolate + L-serine. Its pathway is one-carbon metabolism; tetrahydrofolate interconversion. It functions in the pathway amino-acid biosynthesis; glycine biosynthesis; glycine from L-serine: step 1/1. Its function is as follows. Catalyzes the reversible interconversion of serine and glycine with tetrahydrofolate (THF) serving as the one-carbon carrier. This reaction serves as the major source of one-carbon groups required for the biosynthesis of purines, thymidylate, methionine, and other important biomolecules. Also exhibits THF-independent aldolase activity toward beta-hydroxyamino acids, producing glycine and aldehydes, via a retro-aldol mechanism. This is Serine hydroxymethyltransferase from Leptothrix cholodnii (strain ATCC 51168 / LMG 8142 / SP-6) (Leptothrix discophora (strain SP-6)).